The primary structure comprises 292 residues: Probable 2-(5''-triphosphoribosyl)-3'-dephosphocoenzyme-A synthase (292 aa).

This sequence belongs to the CitG/MdcB family.

The enzyme catalyses 3'-dephospho-CoA + ATP = 2'-(5''-triphospho-alpha-D-ribosyl)-3'-dephospho-CoA + adenine. This chain is Probable 2-(5''-triphosphoribosyl)-3'-dephosphocoenzyme-A synthase, found in Shigella flexneri serotype 5b (strain 8401).